Here is a 257-residue protein sequence, read N- to C-terminus: Deoxyribose-phosphate aldolase (257 aa).

Aspartate 102 acts as the Proton donor/acceptor in catalysis. Residue lysine 166 is the Schiff-base intermediate with acetaldehyde of the active site. Lysine 198 functions as the Proton donor/acceptor in the catalytic mechanism.

The protein belongs to the DeoC/FbaB aldolase family. DeoC type 2 subfamily.

Its subcellular location is the cytoplasm. It carries out the reaction 2-deoxy-D-ribose 5-phosphate = D-glyceraldehyde 3-phosphate + acetaldehyde. It functions in the pathway carbohydrate degradation; 2-deoxy-D-ribose 1-phosphate degradation; D-glyceraldehyde 3-phosphate and acetaldehyde from 2-deoxy-alpha-D-ribose 1-phosphate: step 2/2. Catalyzes a reversible aldol reaction between acetaldehyde and D-glyceraldehyde 3-phosphate to generate 2-deoxy-D-ribose 5-phosphate. The protein is Deoxyribose-phosphate aldolase of Aeromonas salmonicida (strain A449).